An 826-amino-acid polypeptide reads, in one-letter code: Golgin subfamily A member 6-like protein 25 (826 aa).

6 disordered regions span residues 1 to 100 (MWPQ…HQEA), 297 to 327 (QEQEEKIREQEEKMRRQEEMMWEKEEKMRRQ), 345 to 425 (MHEQ…EMWR), 502 to 534 (QEEMWREEEKMHEQEKIWEEEKRQEQEDKMWRQ), 547 to 646 (RQEE…EQEE), and 658 to 826 (QEEM…MQEH). Basic and acidic residues predominate over residues 31–52 (MSKETRQSKLAEAKEQLTDHHP). Polar residues-rich tracts occupy residues 53 to 63 (QTNPSVGTAAS) and 71 to 83 (NNGTNPETTTSGG). The segment covering 86–100 (SPEDEQKASHQHQEA) has biased composition (basic and acidic residues). Positions 157–822 (LEQALSAVAT…EVRLRQQEEK (666 aa)) form a coiled coil. Composition is skewed to basic and acidic residues over residues 658–678 (QEEMMQEQEEKMGEQEEKMWE) and 686–826 (QEEK…MQEH).

This sequence belongs to the GOLGA6 family.

The chain is Golgin subfamily A member 6-like protein 25 from Homo sapiens (Human).